The following is a 259-amino-acid chain: Pimeloyl-[acyl-carrier protein] methyl ester esterase (259 aa).

One can recognise an AB hydrolase-1 domain in the interval 15-242 (HLVLLHGWGL…AAHAPFISHP (228 aa)). Substrate-binding positions include tryptophan 22, 82–83 (SL), and 143–147 (FLALQ). Serine 82 (nucleophile) is an active-site residue. Residues aspartate 207 and histidine 235 contribute to the active site. A substrate-binding site is contributed by histidine 235.

The protein belongs to the AB hydrolase superfamily. Carboxylesterase BioH family. In terms of assembly, monomer.

The protein resides in the cytoplasm. The catalysed reaction is 6-carboxyhexanoyl-[ACP] methyl ester + H2O = 6-carboxyhexanoyl-[ACP] + methanol + H(+). The protein operates within cofactor biosynthesis; biotin biosynthesis. The physiological role of BioH is to remove the methyl group introduced by BioC when the pimeloyl moiety is complete. It allows to synthesize pimeloyl-ACP via the fatty acid synthetic pathway through the hydrolysis of the ester bonds of pimeloyl-ACP esters. This is Pimeloyl-[acyl-carrier protein] methyl ester esterase from Cronobacter sakazakii (strain ATCC BAA-894) (Enterobacter sakazakii).